The primary structure comprises 309 residues: Putative taste receptor type 2 member 33 (309 aa).

Position 1 (M1) is a topological domain, extracellular. The helical transmembrane segment at 2–22 (VYFLPIIFSILVVFAFVLGNF) threads the bilayer. The Cytoplasmic portion of the chain corresponds to 23-46 (SNGFIALVNVIDWVKRQKISSADQ). The chain crosses the membrane as a helical span at residues 47–67 (ILTALVVSRVGLLWVILLHWY). Topologically, residues 68-86 (ANVFNSALYSLEVRIVASN) are extracellular. An N-linked (GlcNAc...) asparagine glycan is attached at N86. A helical transmembrane segment spans residues 87–107 (ISAVINHFSIWLAASLSIFYL). Over 108–127 (LKIANFSNLIFLHLKKRIKS) the chain is Cytoplasmic. The helical transmembrane segment at 128–148 (VVLVILLGPLVFLICNLAVIT) threads the bilayer. Residues 149–181 (MDERVWTKEYEGNVTWKIKLRNAIHLSSLTVTT) lie on the Extracellular side of the membrane. The N-linked (GlcNAc...) asparagine glycan is linked to N161. The helical transmembrane segment at 182 to 202 (LANLIPFTLSLICFLLLICSL) threads the bilayer. Topologically, residues 203-229 (CKHLKKMQLHSKGSQDPSTKVHIKALQ) are cytoplasmic. Residues 230–250 (TVISFLMLCAIYFLSIMISVW) form a helical membrane-spanning segment. Residues 251–259 (NLRSLENKP) lie on the Extracellular side of the membrane. Residues 260-280 (VFMFCKAIRFSYPSIHPFILI) form a helical membrane-spanning segment. The Cytoplasmic segment spans residues 281–309 (WGNKKLKQTFLSVFWQVRYWVKGEKPSSP).

It belongs to the G-protein coupled receptor T2R family.

It localises to the membrane. Functionally, putative taste receptor which may play a role in the perception of bitterness. The sequence is that of Putative taste receptor type 2 member 33 from Homo sapiens (Human).